We begin with the raw amino-acid sequence, 88 residues long: Cytochrome c oxidase subunit 6B2 (88 aa).

In terms of domain architecture, CHCH spans 29–75; that stretch reads TRNCYQNFLDYHRCIKTMNRRGKSTQPCEYYFRVYHSLCPISWVQRW. The Cx9C motif motif lies at 32–42; that stretch reads CYQNFLDYHRC. Cystine bridges form between C32/C67 and C42/C56. The short motif at 56-67 is the Cx10C motif element; it reads CEYYFRVYHSLC.

It belongs to the cytochrome c oxidase subunit 6B family. In terms of assembly, component of the cytochrome c oxidase (complex IV, CIV), a multisubunit enzyme composed of 14 subunits. The complex is composed of a catalytic core of 3 subunits MT-CO1, MT-CO2 and MT-CO3, encoded in the mitochondrial DNA, and 11 supernumerary subunits COX4I1 (or COX4I2), COX5A, COX5B, COX6A2 (or COX6A1), COX6B1 (or COX6B2), COX6C, COX7A1 (or COX7A2), COX7B, COX7C, COX8B and NDUFA4, which are encoded in the nuclear genome. The complex exists as a monomer or a dimer and forms supercomplexes (SCs) in the inner mitochondrial membrane with NADH-ubiquinone oxidoreductase (complex I, CI) and ubiquinol-cytochrome c oxidoreductase (cytochrome b-c1 complex, complex III, CIII), resulting in different assemblies (supercomplex SCI(1)III(2)IV(1) and megacomplex MCI(2)III(2)IV(2)). In terms of tissue distribution, testis specific.

It localises to the mitochondrion inner membrane. The protein operates within energy metabolism; oxidative phosphorylation. In terms of biological role, component of the cytochrome c oxidase, the last enzyme in the mitochondrial electron transport chain which drives oxidative phosphorylation. The respiratory chain contains 3 multisubunit complexes succinate dehydrogenase (complex II, CII), ubiquinol-cytochrome c oxidoreductase (cytochrome b-c1 complex, complex III, CIII) and cytochrome c oxidase (complex IV, CIV), that cooperate to transfer electrons derived from NADH and succinate to molecular oxygen, creating an electrochemical gradient over the inner membrane that drives transmembrane transport and the ATP synthase. Cytochrome c oxidase is the component of the respiratory chain that catalyzes the reduction of oxygen to water. Electrons originating from reduced cytochrome c in the intermembrane space (IMS) are transferred via the dinuclear copper A center (CU(A)) of subunit 2 and heme A of subunit 1 to the active site in subunit 1, a binuclear center (BNC) formed by heme A3 and copper B (CU(B)). The BNC reduces molecular oxygen to 2 water molecules using 4 electrons from cytochrome c in the IMS and 4 protons from the mitochondrial matrix. This Bos taurus (Bovine) protein is Cytochrome c oxidase subunit 6B2 (COX6B2).